A 443-amino-acid chain; its full sequence is DNA double-strand break repair protein Mre11 (443 aa).

4 residues coordinate Mn(2+): Asp-8, His-10, Asp-49, and Asn-84. His-85 functions as the Proton donor in the catalytic mechanism. Mn(2+) contacts are provided by His-169, His-201, and His-203. A disordered region spans residues 382-429 (QEEGAEERVVEEETEKKVEEQFKGDEEADEAERRAEETEKAKSTKKAR). The segment covering 395 to 423 (TEKKVEEQFKGDEEADEAERRAEETEKAK) has biased composition (basic and acidic residues).

Belongs to the MRE11/RAD32 family. In terms of assembly, homodimer. Forms a heterotetramer composed of two Mre11 subunits and two Rad50 subunits. Mn(2+) is required as a cofactor.

Its activity is regulated as follows. Nuclease activity is regulated by Rad50. In terms of biological role, part of the Rad50/Mre11 complex, which is involved in the early steps of DNA double-strand break (DSB) repair. The complex may facilitate opening of the processed DNA ends to aid in the recruitment of HerA and NurA. Mre11 binds to DSB ends and has both double-stranded 3'-5' exonuclease activity and single-stranded endonuclease activity. The polypeptide is DNA double-strand break repair protein Mre11 (Archaeoglobus fulgidus (strain ATCC 49558 / DSM 4304 / JCM 9628 / NBRC 100126 / VC-16)).